Consider the following 281-residue polypeptide: Ribosomal RNA small subunit methyltransferase A (281 aa).

Residues asparagine 18, leucine 20, glycine 45, glutamate 66, aspartate 91, and asparagine 118 each coordinate S-adenosyl-L-methionine.

The protein belongs to the class I-like SAM-binding methyltransferase superfamily. rRNA adenine N(6)-methyltransferase family. RsmA subfamily.

The protein resides in the cytoplasm. The enzyme catalyses adenosine(1518)/adenosine(1519) in 16S rRNA + 4 S-adenosyl-L-methionine = N(6)-dimethyladenosine(1518)/N(6)-dimethyladenosine(1519) in 16S rRNA + 4 S-adenosyl-L-homocysteine + 4 H(+). Functionally, specifically dimethylates two adjacent adenosines (A1518 and A1519) in the loop of a conserved hairpin near the 3'-end of 16S rRNA in the 30S particle. May play a critical role in biogenesis of 30S subunits. The polypeptide is Ribosomal RNA small subunit methyltransferase A (Histophilus somni (strain 129Pt) (Haemophilus somnus)).